A 224-amino-acid polypeptide reads, in one-letter code: Large ribosomal subunit protein uL3 (224 aa).

Position 159 is an N5-methylglutamine (glutamine 159).

This sequence belongs to the universal ribosomal protein uL3 family. As to quaternary structure, part of the 50S ribosomal subunit. Forms a cluster with proteins L14 and L19. Methylated by PrmB.

Functionally, one of the primary rRNA binding proteins, it binds directly near the 3'-end of the 23S rRNA, where it nucleates assembly of the 50S subunit. In Janthinobacterium sp. (strain Marseille) (Minibacterium massiliensis), this protein is Large ribosomal subunit protein uL3.